The primary structure comprises 363 residues: Isopentenyl-diphosphate delta-isomerase (363 aa).

Substrate is bound at residue R7–K8. Residues A71–T73, S101, and N130 each bind FMN. A substrate-binding site is contributed by Q160. E161 contacts Mg(2+). FMN contacts are provided by residues K192, S217, T222, G270–R272, and A291–G292.

The protein belongs to the IPP isomerase type 2 family. In terms of assembly, homooctamer. Dimer of tetramers. The cofactor is FMN. NADPH is required as a cofactor. Mg(2+) serves as cofactor.

The protein localises to the cytoplasm. The enzyme catalyses isopentenyl diphosphate = dimethylallyl diphosphate. Its function is as follows. Involved in the biosynthesis of isoprenoids. Catalyzes the 1,3-allylic rearrangement of the homoallylic substrate isopentenyl (IPP) to its allylic isomer, dimethylallyl diphosphate (DMAPP). This chain is Isopentenyl-diphosphate delta-isomerase, found in Symbiobacterium thermophilum (strain DSM 24528 / JCM 14929 / IAM 14863 / T).